We begin with the raw amino-acid sequence, 188 residues long: Cell division protein SepF (188 aa).

The disordered stretch occupies residues 29–53 (EQQDQDQRATQADGGALATLGDSNP).

Belongs to the SepF family. As to quaternary structure, homodimer. Interacts with FtsZ.

It is found in the cytoplasm. Its function is as follows. Cell division protein that is part of the divisome complex and is recruited early to the Z-ring. Probably stimulates Z-ring formation, perhaps through the cross-linking of FtsZ protofilaments. Its function overlaps with FtsA. The chain is Cell division protein SepF from Synechococcus sp. (strain CC9902).